We begin with the raw amino-acid sequence, 250 residues long: Biosynthetic peptidoglycan transglycosylase (250 aa).

The helical transmembrane segment at 15–35 threads the bilayer; the sequence is AVLLFFVSSLGFVLLYRFVPV.

Belongs to the glycosyltransferase 51 family.

The protein localises to the cell inner membrane. The enzyme catalyses [GlcNAc-(1-&gt;4)-Mur2Ac(oyl-L-Ala-gamma-D-Glu-L-Lys-D-Ala-D-Ala)](n)-di-trans,octa-cis-undecaprenyl diphosphate + beta-D-GlcNAc-(1-&gt;4)-Mur2Ac(oyl-L-Ala-gamma-D-Glu-L-Lys-D-Ala-D-Ala)-di-trans,octa-cis-undecaprenyl diphosphate = [GlcNAc-(1-&gt;4)-Mur2Ac(oyl-L-Ala-gamma-D-Glu-L-Lys-D-Ala-D-Ala)](n+1)-di-trans,octa-cis-undecaprenyl diphosphate + di-trans,octa-cis-undecaprenyl diphosphate + H(+). The protein operates within cell wall biogenesis; peptidoglycan biosynthesis. Peptidoglycan polymerase that catalyzes glycan chain elongation from lipid-linked precursors. This chain is Biosynthetic peptidoglycan transglycosylase, found in Bdellovibrio bacteriovorus (strain ATCC 15356 / DSM 50701 / NCIMB 9529 / HD100).